Reading from the N-terminus, the 579-residue chain is Acyl-coenzyme A synthetase ACSM5, mitochondrial (579 aa).

Residues 1–26 (MRPWLRHLVLQALRNSRAFCGSHGKP) constitute a mitochondrion transit peptide. N6-acetyllysine; alternate is present on Lys97. Lys97 is subject to N6-succinyllysine; alternate. N6-acetyllysine is present on Lys152. An ATP-binding site is contributed by 230-238 (TSGTTGAPK). The residue at position 303 (Lys303) is an N6-acetyllysine; alternate. At Lys303 the chain carries N6-succinyllysine; alternate. Residues 368–373 (EGYGQS), Asp455, Arg470, and Lys566 contribute to the ATP site.

The protein belongs to the ATP-dependent AMP-binding enzyme family. Mg(2+) is required as a cofactor. The cofactor is Mn(2+). As to expression, detected in kidney and liver.

Its subcellular location is the mitochondrion matrix. It catalyses the reaction a medium-chain fatty acid + ATP + CoA = a medium-chain fatty acyl-CoA + AMP + diphosphate. Functionally, catalyzes the activation of fatty acids by CoA to produce an acyl-CoA, the first step in fatty acid metabolism. This Homo sapiens (Human) protein is Acyl-coenzyme A synthetase ACSM5, mitochondrial (ACSM5).